Here is an 89-residue protein sequence, read N- to C-terminus: Small ribosomal subunit protein uS15 (89 aa).

This sequence belongs to the universal ribosomal protein uS15 family. As to quaternary structure, part of the 30S ribosomal subunit. Forms a bridge to the 50S subunit in the 70S ribosome, contacting the 23S rRNA.

Its function is as follows. One of the primary rRNA binding proteins, it binds directly to 16S rRNA where it helps nucleate assembly of the platform of the 30S subunit by binding and bridging several RNA helices of the 16S rRNA. Functionally, forms an intersubunit bridge (bridge B4) with the 23S rRNA of the 50S subunit in the ribosome. The chain is Small ribosomal subunit protein uS15 from Saccharopolyspora erythraea (strain ATCC 11635 / DSM 40517 / JCM 4748 / NBRC 13426 / NCIMB 8594 / NRRL 2338).